The chain runs to 183 residues: Caltractin ICL1f (183 aa).

Residues 1-19 (MARRGQQPPQQQQQAQPAQ) are compositionally biased toward low complexity. A disordered region spans residues 1–30 (MARRGQQPPQQQQQAQPAQKNQAGKFNPAE). 4 EF-hand domains span residues 39–74 (EEVLEIKEAFDLFDTDGTQSIDPKELKAAMTSLGFE), 75–110 (AKNQTIYQMISDLDTDGSGQIDFAEFLKLMTARISE), 112–147 (DSKADIQKVFNLFDSERAGFITLKDLRKVAKELGET), and 148–183 (MDDSELQEMIDRADSDGDTQVTFEDFYNIMTKKTFA). Residues D52, D54, T56, S58, E63, D88, D90, S92, Q94, and E99 each contribute to the Ca(2+) site.

Belongs to the centrin family. As to quaternary structure, monomer.

Its subcellular location is the cytoplasm. It localises to the cytoskeleton. Plays a fundamental role in microtubule organizing center structure and function. Component of the infraciliary lattice (ICL) and the ciliary basal bodies. In Paramecium tetraurelia, this protein is Caltractin ICL1f (Icl1f).